The chain runs to 315 residues: Olfactory receptor 56A3 (315 aa).

The Extracellular portion of the chain corresponds to 1-29; it reads MTTHRNDTLSTEASDFLLNCFVRSPSWQH. N-linked (GlcNAc...) asparagine glycosylation is present at asparagine 6. The helical transmembrane segment at 30–50 threads the bilayer; the sequence is WLSLPLSLLFLLAVGANTTLL. Over 51–58 the chain is Cytoplasmic; that stretch reads MTIWLEAS. The chain crosses the membrane as a helical span at residues 59 to 79; the sequence is LHQPLYYLLSLLSLLDIVLCL. Over 80–103 the chain is Extracellular; sequence TVIPKVLTIFWFDLRPISFPACFL. Cysteine 101 and cysteine 193 form a disulfide bridge. A helical membrane pass occupies residues 104–124; it reads QMYIMNCFLAMESCTFMVMAY. Over 125-143 the chain is Cytoplasmic; the sequence is DRYVAICHPLRYPSIITDH. A helical transmembrane segment spans residues 144–164; it reads FVVKAAMFILTRNVLMTLPIP. At 165–200 the chain is on the extracellular side; the sequence is ILSAQLRYCGRNVIENCICANMSVSRLSCDDVTINH. The N-linked (GlcNAc...) asparagine glycan is linked to asparagine 185. Residues 201-221 form a helical membrane-spanning segment; it reads LYQFAGGWTLLGSDLILIFLS. The Cytoplasmic segment spans residues 222-241; the sequence is YTFILRAVLRLKAEGAVAKA. A helical transmembrane segment spans residues 242-262; that stretch reads LSTCGSHFMLILFFSTILLVF. At 263–277 the chain is on the extracellular side; the sequence is VLTHVAKKKVSPDVP. A helical membrane pass occupies residues 278–298; the sequence is VLLNVLHHVIPAALNPIIYGV. Residues 299-315 are Cytoplasmic-facing; that stretch reads RTQEIKQGMQRLLKKGC.

The protein belongs to the G-protein coupled receptor 1 family.

Its subcellular location is the cell membrane. Functionally, odorant receptor. This Homo sapiens (Human) protein is Olfactory receptor 56A3 (OR56A3).